We begin with the raw amino-acid sequence, 311 residues long: MRALFFGTPAIAVPSLEALASIADVVGVVCQPDRPAGRGLELKAPPVKVKALELGVPVLQPEKVRTPEFAAWVAGAGADVALVIAYGRILPKAVLEAPRRGCMNLHASILPRYRGAAPITWAIVGGETETGISLMQMDEGMDTGPVYAVRRTPIGPDTTADELAIDLGALAARVVREDLRRAVDGELAPTPQDHEAATHAALLKKEDGRIRWERSARQIHDHIRGMTSWPGAFTTIDGKALKVLAAHVESEADQGGAPPGTVVMAGRSVVVVACGAGAIQIVRAQVEGRKPLAAADLVAGRTLQAGMVLGR.

Ser-108 to Pro-111 is a (6S)-5,6,7,8-tetrahydrofolate binding site.

The protein belongs to the Fmt family.

The catalysed reaction is L-methionyl-tRNA(fMet) + (6R)-10-formyltetrahydrofolate = N-formyl-L-methionyl-tRNA(fMet) + (6S)-5,6,7,8-tetrahydrofolate + H(+). In terms of biological role, attaches a formyl group to the free amino group of methionyl-tRNA(fMet). The formyl group appears to play a dual role in the initiator identity of N-formylmethionyl-tRNA by promoting its recognition by IF2 and preventing the misappropriation of this tRNA by the elongation apparatus. The protein is Methionyl-tRNA formyltransferase of Sorangium cellulosum (strain So ce56) (Polyangium cellulosum (strain So ce56)).